A 271-amino-acid polypeptide reads, in one-letter code: Insulin-like growth factor-binding protein 5 (271 aa).

An N-terminal signal peptide occupies residues 1–19 (MVISVVLLLLAAYAVPAQG). Positions 22 to 102 (SFVHCEPCDE…LHGRGVCLNE (81 aa)) constitute an IGFBP N-terminal domain. Disulfide bonds link cysteine 26-cysteine 52, cysteine 29-cysteine 54, cysteine 37-cysteine 55, cysteine 44-cysteine 58, cysteine 66-cysteine 79, and cysteine 73-cysteine 99. Over residues 109-121 (TKIERDSREHEEP) the composition is skewed to basic and acidic residues. The segment at 109–129 (TKIERDSREHEEPTTSEMAEE) is disordered. Residue serine 115 is modified to Phosphoserine. Positions 188–262 (QGPCRRHMEA…MEYVDGDFQC (75 aa)) constitute a Thyroglobulin type-1 domain. 3 disulfides stabilise this stretch: cysteine 191–cysteine 218, cysteine 229–cysteine 240, and cysteine 242–cysteine 262.

As to quaternary structure, interacts with IGF1; this interaction enhances the growth stimulatory effects of IGF1 on fibroblasts. Interacts with CAV1; this interaction allows trafficking of IGFBP5 from the plasma membrane to the nucleus. Interacts with NCL; this interaction is necessary for IGFBP5 localization to the nucleus. In terms of tissue distribution, most abundant in kidney, uterus and gastrocnemius muscle.

It is found in the secreted. It localises to the cytoplasm. Its subcellular location is the nucleus. Functionally, multifunctional protein that plays a critical role in regulating the availability of IGFs to their receptors and thereby regulates IGF-mediated cellular processes including proliferation, differentiation, and apoptosis in a cell-type specific manner. Increases the cell proliferation of osteoblasts, intestinal smooth muscle cells and neuroblastoma cells. Enhances adhesion and survival of epithelial cells but decreases adhesion of mesenchymal cells. Once secreted, acts as a major mediator of mTORC1-dependent feedback inhibition of IGF1 signaling. Also plays a role in the induction of extracellular matrix (ECM) production and deposition independently of its nuclear translocation and binding to IGFs. Acts itself as a growth factor that can act independently of IGFs to regulate bone formation. Acts as a ligand for the ROR1 receptor which triggers formation of ROR1/HER2 heterodimer to enhance CREB oncogenic signaling. This is Insulin-like growth factor-binding protein 5 (Igfbp5) from Mus musculus (Mouse).